A 194-amino-acid chain; its full sequence is MNRKDKYYIRAKRENYRSRASYKIIEINNKYNIVSRGDNVLEFGSSPGGWTQVIENITQSVIIAVDINRMDPVKNTVFIKMNIFDDDIFKSIDHAMAENNIKNFDSILSDAMSRTSGIEDRDHYNSYKICERVMDISIPRLKNGGNIILKQFQGDMTNEFIKKWSGYFNYYKITKPKASRQHSREIYIIFLNRI.

S-adenosyl-L-methionine is bound by residues glycine 48, tryptophan 50, aspartate 66, asparagine 82, and aspartate 110. Lysine 150 acts as the Proton acceptor in catalysis.

This sequence belongs to the class I-like SAM-binding methyltransferase superfamily. RNA methyltransferase RlmE family.

Its subcellular location is the cytoplasm. The catalysed reaction is uridine(2552) in 23S rRNA + S-adenosyl-L-methionine = 2'-O-methyluridine(2552) in 23S rRNA + S-adenosyl-L-homocysteine + H(+). Its function is as follows. Specifically methylates the uridine in position 2552 of 23S rRNA at the 2'-O position of the ribose in the fully assembled 50S ribosomal subunit. In Picrophilus torridus (strain ATCC 700027 / DSM 9790 / JCM 10055 / NBRC 100828 / KAW 2/3), this protein is Ribosomal RNA large subunit methyltransferase E.